The following is a 311-amino-acid chain: Small ribosomal subunit biogenesis GTPase RsgA (311 aa).

Residues 88–246 form the CP-type G domain; the sequence is SKEKEQVIVA…VIDTPGIREF (159 aa). GTP is bound by residues 137–140 and 188–196; these read NKID and GHSGVGKST. 4 residues coordinate Zn(2+): C270, C275, H277, and C283.

The protein belongs to the TRAFAC class YlqF/YawG GTPase family. RsgA subfamily. As to quaternary structure, monomer. Associates with 30S ribosomal subunit, binds 16S rRNA. Requires Zn(2+) as cofactor.

It is found in the cytoplasm. Its function is as follows. One of several proteins that assist in the late maturation steps of the functional core of the 30S ribosomal subunit. Helps release RbfA from mature subunits. May play a role in the assembly of ribosomal proteins into the subunit. Circularly permuted GTPase that catalyzes slow GTP hydrolysis, GTPase activity is stimulated by the 30S ribosomal subunit. The protein is Small ribosomal subunit biogenesis GTPase RsgA of Chlorobaculum tepidum (strain ATCC 49652 / DSM 12025 / NBRC 103806 / TLS) (Chlorobium tepidum).